A 1938-amino-acid chain; its full sequence is Myosin-1 (1938 aa).

Positions 1–27 are disordered; the sequence is MSLEHEKDPGWQYLKRSREQQLADQSR. Residues 16–27 show a composition bias toward basic and acidic residues; sequence RSREQQLADQSR. The Myosin N-terminal SH3-like domain maps to 30-80; that stretch reads DSKKNVWIPDAEEGYIEGVIKGPGPKADTVIVTAGGKDVTLKKDIVQEVNP. The 702-residue stretch at 84-785 folds into the Myosin motor domain; it reads EKTEDMSNLT…VVAHIEDLRD (702 aa). An N6,N6,N6-trimethyllysine modification is found at K128. 177-184 serves as a coordination point for ATP; that stretch reads GESGAGKT. Actin-binding regions lie at residues 660 to 682 and 764 to 778; these read LNKLMTMLHKTHPHFIRCIIPNE and RIGHTKVFFKAGVVA. Residues 846-1170 are alpha-helical tailpiece (short S2); sequence QLKCGKMAEE…NKQLEIQQDN (325 aa). The rodlike tail (S2 and LMM domains) stretch occupies residues 846-1938; sequence QLKCGKMAEE…GQVVRSATNK (1093 aa). The stretch at 846-1938 forms a coiled coil; that stretch reads QLKCGKMAEE…GQVVRSATNK (1093 aa). The disordered stretch occupies residues 919 to 951; sequence RQEVEKSLNDANDRLSEHEEKNADLEKQRRKAQ. A compositionally biased stretch (basic and acidic residues) spans 920–951; that stretch reads QEVEKSLNDANDRLSEHEEKNADLEKQRRKAQ. The segment at 1171-1938 is light meromyosin (LMM); sequence NKKKDSEIIK…GQVVRSATNK (768 aa).

The protein belongs to the TRAFAC class myosin-kinesin ATPase superfamily. Myosin family. Muscle myosin is a hexameric protein that consists of 2 heavy chain subunits (MHC), 2 alkali light chain subunits (MLC) and 2 regulatory light chain subunits (MLC-2). Interacts with itr-1 (via c-terminal coiled coil domain). Found exclusively in the pharyngeal muscle.

It is found in the cytoplasm. The protein resides in the myofibril. Muscle contraction. In Caenorhabditis elegans, this protein is Myosin-1.